A 178-amino-acid chain; its full sequence is Cytochrome b6-f complex iron-sulfur subunit (178 aa).

The chain crosses the membrane as a helical span at residues 20-42 (LLTFGTATGVALGALYPVANYFM). The region spanning 65–161 (KTGWLATHQA…VDIEDDAVLV (97 aa)) is the Rieske domain. Residues Cys107, His109, Cys125, and His128 each coordinate [2Fe-2S] cluster. A disulfide bridge connects residues Cys112 and Cys127.

It belongs to the Rieske iron-sulfur protein family. In terms of assembly, the 4 large subunits of the cytochrome b6-f complex are cytochrome b6, subunit IV (17 kDa polypeptide, PetD), cytochrome f and the Rieske protein, while the 4 small subunits are PetG, PetL, PetM and PetN. The complex functions as a dimer. [2Fe-2S] cluster is required as a cofactor.

The protein localises to the cellular thylakoid membrane. It carries out the reaction 2 oxidized [plastocyanin] + a plastoquinol + 2 H(+)(in) = 2 reduced [plastocyanin] + a plastoquinone + 4 H(+)(out). Component of the cytochrome b6-f complex, which mediates electron transfer between photosystem II (PSII) and photosystem I (PSI), cyclic electron flow around PSI, and state transitions. In Prochlorococcus marinus (strain MIT 9301), this protein is Cytochrome b6-f complex iron-sulfur subunit.